The chain runs to 515 residues: Maturase K (515 aa).

The protein belongs to the intron maturase 2 family. MatK subfamily.

It is found in the plastid. The protein localises to the chloroplast. Functionally, usually encoded in the trnK tRNA gene intron. Probably assists in splicing its own and other chloroplast group II introns. The chain is Maturase K from Pinus koraiensis (Korean pine).